The following is a 50-amino-acid chain: uncharacterized protein (50 aa).

This is an uncharacterized protein from Dryophytes versicolor (chameleon treefrog).